A 554-amino-acid polypeptide reads, in one-letter code: Bifunctional epoxide hydrolase 2 (554 aa).

The interval 1 to 224 (MALRVAAFDL…KVTGTQFPEA (224 aa)) is phosphatase. Residues D9 and D11 each contribute to the Mg(2+) site. K55 bears the N6-succinyllysine mark. 123 to 124 (TN) is a binding site for phosphate. At K176 the chain carries N6-acetyllysine; alternate. K176 carries the N6-succinyllysine; alternate modification. D185 serves as a coordination point for Mg(2+). N6-acetyllysine occurs at positions 191 and 215. Residues 233-554 (NDVSHGYVTV…IQNPSVTSKI (322 aa)) form an epoxide hydrolase region. The AB hydrolase-1 domain occupies 257 to 530 (PAICLCHGFP…CGHWTQIEKP (274 aa)). D333 acts as the Nucleophile in catalysis. S368 carries the phosphoserine modification. Residue Y381 coordinates substrate. N6-succinyllysine is present on residues K420 and K454. The Proton donor role is filled by Y465. At K504 the chain carries N6-succinyllysine. C521 is lipidated: S-(15-deoxy-Delta12,14-prostaglandin J2-9-yl)cysteine. H523 serves as the catalytic Proton acceptor. The short motif at 552–554 (SKI) is the Microbody targeting signal element. An N6-succinyllysine modification is found at K553.

The protein belongs to the AB hydrolase superfamily. Epoxide hydrolase family. In terms of assembly, homodimer. The cofactor is Mg(2+). Post-translationally, the covalent modification of cysteine by 15-deoxy-Delta12,14-prostaglandin-J2 is autocatalytic and reversible. It may occur as an alternative to other cysteine modifications, such as S-nitrosylation and S-palmitoylation.

The protein resides in the cytoplasm. The protein localises to the peroxisome. The catalysed reaction is an epoxide + H2O = an ethanediol. The enzyme catalyses (9S,10S)-10-hydroxy-9-(phosphooxy)octadecanoate + H2O = (9S,10S)-9,10-dihydroxyoctadecanoate + phosphate. It catalyses the reaction 8-hydroxy-(11S,12S)-epoxy-(5Z,9E,14Z)-eicosatrienoate + H2O = (8,11R,12S)-trihydroxy-(5Z,9E,14Z)-eicosatrienoate. It carries out the reaction 10-hydroxy-(11S,12S)-epoxy- (5Z,8Z,14Z)-eicosatrienoate + H2O = (10,11S,12R)-trihydroxy-(5Z,8Z,14Z)-eicosatrienoate. The catalysed reaction is 12-phosphooxy-(9Z)-octadecenoate + H2O = 12-hydroxy-(9Z)-octadecenoate + phosphate. The enzyme catalyses 12-phosphooxy-(9E)-octadecenoate + H2O = 12-hydroxy-(9E)-octadecenoate + phosphate. It catalyses the reaction 12-(phosphooxy)octadecanoate + H2O = 12-hydroxyoctadecanoate + phosphate. It carries out the reaction 8,9-epoxy-(5Z,11Z,14Z)-eicosatrienoate + H2O = 8,9-dihydroxy-(5Z,11Z,14Z)-eicosatrienoate. The catalysed reaction is 11,12-epoxy-(5Z,8Z,14Z)-eicosatrienoate + H2O = 11,12-dihydroxy-(5Z,8Z,14Z)-eicosatrienoate. The enzyme catalyses 14,15-epoxy-(5Z,8Z,11Z)-eicosatrienoate + H2O = 14,15-dihydroxy-(5Z,8Z,11Z)-eicosatrienoate. It catalyses the reaction 9,10-epoxy-(12Z)-octadecenoate + H2O = 9,10-dihydroxy-(12Z)-octadecenoate. It carries out the reaction 1-tetradecanoyl-sn-glycerol 3-phosphate + H2O = 1-tetradecanoyl-sn-glycerol + phosphate. The catalysed reaction is 1-octadecanoyl-sn-glycero-3-phosphate + H2O = 1-octadecanoyl-sn-glycerol + phosphate. The enzyme catalyses 1-(5Z,8Z,11Z,14Z-eicosatetraenoyl)-sn-glycero-3-phosphate + H2O = 1-(5Z,8Z,11Z,14Z-eicosatetraenoyl)-sn-glycerol + phosphate. It catalyses the reaction 1-hexadecanoyl-sn-glycero-3-phosphate + H2O = 1-hexadecanoyl-sn-glycerol + phosphate. It carries out the reaction 1-(9Z-octadecenoyl)-sn-glycero-3-phosphate + H2O = 1-(9Z-octadecenoyl)-sn-glycerol + phosphate. The catalysed reaction is (8S,9R)-epoxy-(5Z,11Z,14Z)-eicosatrienoate + H2O = (8S,9S)-dihydroxy-(5Z,11Z,14Z)-eicosatrienoate. The enzyme catalyses (11S,12R)-epoxy-(5Z,8Z,14Z)-eicosatrienoate + H2O = (11R,12R)-dihydroxy-(5Z,8Z,14Z)-eicosatrienoate. It catalyses the reaction (11S,12R)-epoxy-(5Z,8Z,14Z)-eicosatrienoate + H2O = (11S,12S)-dihydroxy-(5Z,8Z,14Z)-eicosatrienoate. It carries out the reaction (14S,15R)-epoxy-(5Z,8Z,11Z)-eicosatrienoate + H2O = (14R,15R)-dihydroxy-(5Z,8Z,11Z)-eicosatrienoate. The catalysed reaction is (14S,15R)-epoxy-(5Z,8Z,11Z)-eicosatrienoate + H2O = (14S,15S)-dihydroxy-(5Z,8Z,11Z)-eicosatrienoate. The enzyme catalyses (11R,12S)-epoxy-(5Z,8Z,14Z)-eicosatrienoate + H2O = (11S,12S)-dihydroxy-(5Z,8Z,14Z)-eicosatrienoate. It catalyses the reaction (11R,12S)-epoxy-(5Z,8Z,14Z)-eicosatrienoate + H2O = (11R,12R)-dihydroxy-(5Z,8Z,14Z)-eicosatrienoate. It carries out the reaction (8S,9R)-epoxy-(5Z,11Z,14Z)-eicosatrienoate + H2O = (8R,9R)-dihydroxy-(5Z,11Z,14Z)-eicosatrienoate. The catalysed reaction is (14R,15S)-epoxy-(5Z,8Z,11Z)-eicosatrienoate + H2O = (14R,15R)-dihydroxy-(5Z,8Z,11Z)-eicosatrienoate. Inhibited by 1-(1-acetylpiperidin-4-yl)-3-(4-(trifl uoromethoxy)phenyl)urea (TPAU), 1-cyclohexyl-3-dodecylurea (CDU), 12-(3-adamantan-1-yl-ureido)-dodecanoic acid (AUDA), 1-((3S, 5S, 7S)-adamantan-1-yl)-3-(5-(2-(2-ethoxyethoxy) ethoxy)pentyl)urea (AEPU), N-adamantyl-N[']-cyclohexyl urea (ACU), 4-(((1S, 4S)-4-(3-((3S, 5S, 7S)-adamantan-1-yl) ureido)cyclohexyl)oxy)benzoic acid (c-AUCB), 4-(((1R, 4R)-4-(3-((3S, 5S, 7S)-adamantan-1-yl)ureido)cyclohexyl)oxy)benzoic acid (t-AUCB), 4-(((1R, 4R)-4-(3-(4(trifluoromethoxy)phenyl)ureido)cyclohexyl)oxy)benzoic acid (t-TAUCB) and to a lesser extent by 8-(3-((3S, 5S, 7S)-adamantan-1-yl)ureido) octanoic acid (AUOA). Phosphatase activity is inhibited by dodecyl-phosphate, phospholipids such as phospho-lysophosphatidic acids and fatty acids such as palmitic acid and lauric acid. Bifunctional enzyme. The C-terminal domain has epoxide hydrolase activity and acts on epoxides (alkene oxides, oxiranes) and arene oxides. Plays a role in xenobiotic metabolism by degrading potentially toxic epoxides. Also determines steady-state levels of physiological mediators. The N-terminal domain has lipid phosphatase activity, with the highest activity towards threo-9,10-phosphonooxy-hydroxy-octadecanoic acid, followed by erythro-9,10-phosphonooxy-hydroxy-octadecanoic acid, 12-phosphonooxy-octadec-9Z-enoic acid and 12-phosphonooxy-octadec-9E-enoic acid. Functionally, bifunctional enzyme. The C-terminal domain has epoxide hydrolase activity and acts on epoxides (alkene oxides, oxiranes) and arene oxides. Plays a role in xenobiotic metabolism by degrading potentially toxic epoxides. Also determines steady-state levels of physiological mediators. Its function is as follows. Bifunctional enzyme. The N-terminal domain has lipid phosphatase activity, with the highest activity towards threo-9,10-phosphonooxy-hydroxy-octadecanoic acid, followed by erythro-9,10-phosphonooxy-hydroxy-octadecanoic acid, 12-phosphonooxy-octadec-9Z-enoic acid and 12-phosphonooxy-octadec-9E-enoic acid. Has phosphatase activity toward lyso-glycerophospholipids with also some lower activity toward lysolipids of sphingolipid and isoprenoid phosphates. The protein is Bifunctional epoxide hydrolase 2 of Rattus norvegicus (Rat).